We begin with the raw amino-acid sequence, 20 residues long: GLLGSIGNAIGAFIANKLKP.

Expressed by the skin dorsal glands.

It localises to the secreted. Functionally, has no antimicrobial activity. Strongly inhibits the formation of NO by neuronal nitric oxide synthase at micromolar concentrations. Acts by a non-competitive mechanism, probably by binding to calcium/calmodulin and as a consequence blocking calmodulin attachment to nNOS. The polypeptide is Dahlein-5.1 (Ranoidea dahlii (Dahl's aquatic frog)).